The chain runs to 358 residues: Alanine racemase (358 aa).

The active-site Proton acceptor; specific for D-alanine is Lys34. N6-(pyridoxal phosphate)lysine is present on Lys34. Substrate is bound at residue Arg129. The Proton acceptor; specific for L-alanine role is filled by Tyr254. Position 302 (Met302) interacts with substrate.

Belongs to the alanine racemase family. Pyridoxal 5'-phosphate is required as a cofactor.

The enzyme catalyses L-alanine = D-alanine. Its pathway is amino-acid biosynthesis; D-alanine biosynthesis; D-alanine from L-alanine: step 1/1. Catalyzes the interconversion of L-alanine and D-alanine. May also act on other amino acids. This is Alanine racemase (alr) from Vibrio parahaemolyticus serotype O3:K6 (strain RIMD 2210633).